The chain runs to 296 residues: N-acetylmuramic acid 6-phosphate etherase (296 aa).

The SIS domain maps to 54 to 217; it reads VISCFQKGGR…STASMVGIGK (164 aa). Glutamate 82 acts as the Proton donor in catalysis. Glutamate 113 is an active-site residue.

It belongs to the GCKR-like family. MurNAc-6-P etherase subfamily. In terms of assembly, homodimer.

The enzyme catalyses N-acetyl-D-muramate 6-phosphate + H2O = N-acetyl-D-glucosamine 6-phosphate + (R)-lactate. Its pathway is amino-sugar metabolism; N-acetylmuramate degradation. Functionally, specifically catalyzes the cleavage of the D-lactyl ether substituent of MurNAc 6-phosphate, producing GlcNAc 6-phosphate and D-lactate. The protein is N-acetylmuramic acid 6-phosphate etherase of Listeria monocytogenes serotype 4b (strain CLIP80459).